Consider the following 302-residue polypeptide: Probable alpha-L-glutamate ligase 1 (302 aa).

Residues 104–287 (MQLLSRKGIG…VANMIIEFIE (184 aa)) form the ATP-grasp domain. ATP contacts are provided by residues K141, 178–179 (EY), D187, and 211–213 (RSN). 3 residues coordinate Mg(2+): D248, E260, and N262. The Mn(2+) site is built by D248, E260, and N262.

This sequence belongs to the RimK family. It depends on Mg(2+) as a cofactor. Requires Mn(2+) as cofactor.

The protein is Probable alpha-L-glutamate ligase 1 of Pseudoalteromonas atlantica (strain T6c / ATCC BAA-1087).